A 69-amino-acid polypeptide reads, in one-letter code: Light-harvesting polypeptide B-800/860 alpha chain (69 aa).

At 1 to 14 (MTNGKIWLVVKPTV) the chain is on the cytoplasmic side. Residues 15-35 (GLPIGMLFAALLAVLIHGLLF) form a helical membrane-spanning segment. Histidine 31 contributes to the a bacteriochlorophyll binding site. The Periplasmic segment spans residues 36–69 (VDGRLKSWWSEFPVAKPAVVSVQAAPAPVAAEVK).

Belongs to the antenna complex alpha subunit family. In terms of assembly, the core complex is formed by different alpha and beta chains, binding bacteriochlorophyll molecules, and arranged most probably in tetrameric structures disposed around the reaction center. The non-pigmented gamma chains may constitute additional components.

The protein resides in the cell inner membrane. In terms of biological role, antenna complexes are light-harvesting systems, which transfer the excitation energy to the reaction centers. This is Light-harvesting polypeptide B-800/860 alpha chain from Rhodocyclus tenuis (Rhodospirillum tenue).